A 457-amino-acid chain; its full sequence is Multidrug resistance protein MdtK (457 aa).

The next 12 membrane-spanning stretches (helical) occupy residues 11 to 31 (LLALAIPVVIAQLSQTAMGVV), 46 to 66 (AVAVGTSIWLPAILFGHGLLL), 93 to 113 (WLAFCVSVLIMVVIYNSDHII), 127 to 147 (AVGFLHAIMWGAPGYLFFQVL), 160 to 180 (GMVIGFIGLLVNIPINYIFIY), 188 to 208 (LGGVGCGVATGTVYWVMFLMM), 243 to 263 (LPVALALFFEVTLFAVVALLV), 278 to 300 (LNFSSLMFMLPMSLSVAATIRVG), 316 to 336 (YTSIAVGLMLACVTAIFTVVF), 350 to 370 (VVVMASHLMLLAALYQLSDAI), 387 to 407 (IFFITFTAYWLLGLPSGYLLG), and 418 to 438 (PSGFWIGFVIGLTSAAILMAL).

This sequence belongs to the multi antimicrobial extrusion (MATE) (TC 2.A.66.1) family. MdtK subfamily.

It localises to the cell inner membrane. Its function is as follows. Multidrug efflux pump that functions probably as a Na(+)/drug antiporter. The protein is Multidrug resistance protein MdtK of Yersinia enterocolitica serotype O:8 / biotype 1B (strain NCTC 13174 / 8081).